Reading from the N-terminus, the 1284-residue chain is ATP-dependent helicase fft2 (1284 aa).

Polar residues-rich tracts occupy residues methionine 1–serine 10 and glutamate 20–glycine 57. Disordered regions lie at residues methionine 1–glycine 57, alanine 185–valine 252, lysine 317–lysine 339, serine 353–glutamate 388, and proline 446–methionine 465. Positions arginine 201 to threonine 241 are enriched in low complexity. 2 stretches are compositionally biased toward polar residues: residues proline 320–lysine 339 and serine 353–lysine 372. Serine 323 carries the phosphoserine modification. Over residues glutamate 376–glutamate 388 the composition is skewed to acidic residues. The residue at position 383 (serine 383) is a Phosphoserine. One can recognise a Helicase ATP-binding domain in the interval histidine 562–asparagine 730. Residue aspartate 575–threonine 582 coordinates ATP. The short motif at aspartate 681–histidine 684 is the DEGH box element. The disordered stretch occupies residues glutamine 816–leucine 839. Residues leucine 818–aspartate 831 show a composition bias toward basic and acidic residues. The Helicase C-terminal domain occupies valine 928–glutamate 1079. Residues aspartate 1088–aspartate 1284 are disordered. The span at asparagine 1095–glutamate 1107 shows a compositional bias: polar residues. Residues glutamate 1143–lysine 1177 show a composition bias toward basic and acidic residues. Over residues asparagine 1180–serine 1194 the composition is skewed to polar residues. Composition is skewed to basic and acidic residues over residues glutamine 1243–aspartate 1256 and glutamate 1266–aspartate 1284.

Belongs to the SNF2/RAD54 helicase family.

It localises to the cytoplasm. It is found in the nucleus. The enzyme catalyses ATP + H2O = ADP + phosphate + H(+). Its function is as follows. DNA helicase that possesses intrinsic ATP-dependent nucleosome-remodeling activity and is required for heterochromatin organization. This Schizosaccharomyces pombe (strain 972 / ATCC 24843) (Fission yeast) protein is ATP-dependent helicase fft2 (fft2).